Consider the following 712-residue polypeptide: Polyribonucleotide nucleotidyltransferase (712 aa).

Mg(2+) contacts are provided by Asp-493 and Asp-499. The 60-residue stretch at 560–619 (PRLLTFKVDPEDIGKIIGPGGKTVRGITEATGAKVDISDDGTITVSSSVGGQAEAARAMI) folds into the KH domain. The S1 motif domain maps to 629 to 697 (GQVYLGKVTR…HKGRINLTRL (69 aa)).

This sequence belongs to the polyribonucleotide nucleotidyltransferase family. Mg(2+) is required as a cofactor.

It localises to the cytoplasm. It carries out the reaction RNA(n+1) + phosphate = RNA(n) + a ribonucleoside 5'-diphosphate. In terms of biological role, involved in mRNA degradation. Catalyzes the phosphorolysis of single-stranded polyribonucleotides processively in the 3'- to 5'-direction. The protein is Polyribonucleotide nucleotidyltransferase of Synechococcus sp. (strain JA-2-3B'a(2-13)) (Cyanobacteria bacterium Yellowstone B-Prime).